The following is a 541-amino-acid chain: Membrane protein insertase YidC (541 aa).

Transmembrane regions (helical) follow at residues 6 to 26, 356 to 376, 430 to 450, 463 to 483, and 498 to 518; these read FFLI…WEIT, IIHS…LAFY, LPIL…LEMV, LSAP…MFIQ, and IMMA…SGLV.

This sequence belongs to the OXA1/ALB3/YidC family. Type 1 subfamily. As to quaternary structure, interacts with the Sec translocase complex via SecD. Specifically interacts with transmembrane segments of nascent integral membrane proteins during membrane integration.

It is found in the cell inner membrane. Its function is as follows. Required for the insertion and/or proper folding and/or complex formation of integral membrane proteins into the membrane. Involved in integration of membrane proteins that insert both dependently and independently of the Sec translocase complex, as well as at least some lipoproteins. Aids folding of multispanning membrane proteins. This is Membrane protein insertase YidC from Vesicomyosocius okutanii subsp. Calyptogena okutanii (strain HA).